Here is a 103-residue protein sequence, read N- to C-terminus: Histone H4 (103 aa).

The segment covering 1–14 has biased composition (gly residues); the sequence is MSGRGKGGKGLGKG. The segment at 1–20 is disordered; sequence MSGRGKGGKGLGKGGAKRHR. Position 2 is an N-acetylserine (serine 2). Lysine 6 and lysine 13 each carry N6-acetyl-N6-methyllysine; alternate. The residue at position 17 (lysine 17) is an N6-acetyllysine. Residues 17–21 mediate DNA binding; sequence KRHRK. Lysine 21 bears the N6-methyllysine mark.

Belongs to the histone H4 family. In terms of assembly, the nucleosome is a histone octamer containing two molecules each of H2A, H2B, H3 and H4 assembled in one H3-H4 heterotetramer and two H2A-H2B heterodimers. The octamer wraps approximately 147 bp of DNA.

Its subcellular location is the nucleus. It localises to the chromosome. Its function is as follows. Core component of nucleosome. Nucleosomes wrap and compact DNA into chromatin, limiting DNA accessibility to the cellular machineries which require DNA as a template. Histones thereby play a central role in transcription regulation, DNA repair, DNA replication and chromosomal stability. DNA accessibility is regulated via a complex set of post-translational modifications of histones, also called histone code, and nucleosome remodeling. This Holothuria tubulosa (Tubular sea cucumber) protein is Histone H4.